We begin with the raw amino-acid sequence, 190 residues long: Dense granule protein 1 (190 aa).

Residues methionine 1–alanine 24 form the signal peptide. Asparagine 30 carries an N-linked (GlcNAc...) asparagine glycan.

It localises to the secreted. The polypeptide is Dense granule protein 1 (GRA1) (Toxoplasma gondii).